Here is a 440-residue protein sequence, read N- to C-terminus: Nuclear hormone receptor family member nhr-130 (440 aa).

Residues 34-110 (LYTCQVCALP…VGMDPGRFQF (77 aa)) constitute a DNA-binding region (nuclear receptor). NR C4-type zinc fingers lie at residues 37-57 (CQVC…CRAC) and 74-93 (CKKQ…CKKC). The NR LBD domain occupies 184 to 439 (EKPLIARNNL…FSHPEMFEDT (256 aa)).

The protein belongs to the nuclear hormone receptor family.

Its subcellular location is the nucleus. In terms of biological role, orphan nuclear receptor. In Caenorhabditis elegans, this protein is Nuclear hormone receptor family member nhr-130 (nhr-130).